The sequence spans 218 residues: 3,4-dihydroxy-2-butanone 4-phosphate synthase (218 aa).

D-ribulose 5-phosphate contacts are provided by residues 38–39 (RE), aspartate 43, 151–155 (RRGHT), and glutamate 175. Glutamate 39 is a Mg(2+) binding site. Histidine 154 contacts Mg(2+).

This sequence belongs to the DHBP synthase family. Homodimer. Mg(2+) serves as cofactor. It depends on Mn(2+) as a cofactor.

The catalysed reaction is D-ribulose 5-phosphate = (2S)-2-hydroxy-3-oxobutyl phosphate + formate + H(+). It participates in cofactor biosynthesis; riboflavin biosynthesis; 2-hydroxy-3-oxobutyl phosphate from D-ribulose 5-phosphate: step 1/1. Catalyzes the conversion of D-ribulose 5-phosphate to formate and 3,4-dihydroxy-2-butanone 4-phosphate. This Shewanella frigidimarina (strain NCIMB 400) protein is 3,4-dihydroxy-2-butanone 4-phosphate synthase.